The sequence spans 152 residues: MAKMHTKRKGKSSSTRPIRTEPPEWCKIGAEEVTTITLDLWKQGVSTAEIGMTLRDRYGVPDAKLITGKKITTILKENNVYPNVPEDLTNLIVKALRLRKHLSVNKKDVHNKRALNLTESKIRRLVKYYQQEKVLPRDWFYKPETAEMMITR.

The span at 1–11 shows a compositional bias: basic residues; that stretch reads MAKMHTKRKGK. Residues 1–22 form a disordered region; sequence MAKMHTKRKGKSSSTRPIRTEP.

Belongs to the universal ribosomal protein uS15 family. As to quaternary structure, part of the 30S ribosomal subunit.

The chain is Small ribosomal subunit protein uS15 from Methanosarcina barkeri (strain Fusaro / DSM 804).